The chain runs to 452 residues: Putrescine hydroxycinnamoyltransferase (452 aa).

Histidine 151 functions as the Proton acceptor in the catalytic mechanism. A disordered region spans residues 213–234 (PAAGVDGDVGGDHKQQHGHGGE). Positions 222–234 (GGDHKQQHGHGGE) are enriched in basic and acidic residues. Catalysis depends on aspartate 398, which acts as the Proton acceptor.

It belongs to the plant acyltransferase family. Highly expressed in roots. Expressed at low levels in flowers.

Functionally, hydroxycinnamoyl transferase that catalyzes the transfer of an acyl from p-coumaryol-CoA to putrescine, to produce coumaroyl putrescine. Can use feruloyl-CoA, caffeoyl-CoA and sinapoyl-CoA as acyl donors. Seems to be able to transfer the acyl group from feruloyl-CoA to the acyl acceptors agmatine and spermidine. The polypeptide is Putrescine hydroxycinnamoyltransferase (Oryza sativa subsp. japonica (Rice)).